The following is a 96-amino-acid chain: Co-chaperonin GroES (96 aa).

The protein belongs to the GroES chaperonin family. Heptamer of 7 subunits arranged in a ring. Interacts with the chaperonin GroEL.

The protein resides in the cytoplasm. Functionally, together with the chaperonin GroEL, plays an essential role in assisting protein folding. The GroEL-GroES system forms a nano-cage that allows encapsulation of the non-native substrate proteins and provides a physical environment optimized to promote and accelerate protein folding. GroES binds to the apical surface of the GroEL ring, thereby capping the opening of the GroEL channel. The sequence is that of Co-chaperonin GroES from Haemophilus influenzae (strain ATCC 51907 / DSM 11121 / KW20 / Rd).